The primary structure comprises 257 residues: Uroplakin-1a (257 aa).

At 1 to 13 (MASAATEGEKGSP) the chain is on the cytoplasmic side. Residues 14 to 34 (VVVGLLVVGNIIILLSGLALF) form a helical membrane-spanning segment. Residues 35 to 58 (AETVWVTADQYRVYPLMGVSGKDD) lie on the Extracellular side of the membrane. Residues 59–85 (VFAGAWIAIFCGFSFFVVASFGVGAAL) traverse the membrane as a helical segment. The Cytoplasmic portion of the chain corresponds to 86–90 (CRRRY). The chain crosses the membrane as a helical span at residues 91–111 (MILTYLLLMLIVYIFECASCI). Over 112–229 (TSYTHRDYMV…HIGHAIDSYT (118 aa)) the chain is Extracellular. Asparagine 169 carries N-linked (GlcNAc...) asparagine glycosylation. The chain crosses the membrane as a helical span at residues 230–251 (WGISWFGFAILMWTLPVMLIAM). Residues 252–257 (YFYTTL) are Cytoplasmic-facing.

It belongs to the tetraspanin (TM4SF) family. As to quaternary structure, homodimer; disulfide-linked. Interacts with uroplakin-2 (UPK2). Binds to uropathogenic E.coli fimH.

It is found in the membrane. Functionally, component of the asymmetric unit membrane (AUM); a highly specialized biomembrane elaborated by terminally differentiated urothelial cells. May play an important role in normal bladder epithelial physiology, possibly in regulating membrane permeability of superficial umbrella cells or in stabilizing the apical membrane through AUM/cytoskeletal interactions. The sequence is that of Uroplakin-1a (Upk1a) from Mus musculus (Mouse).